The primary structure comprises 187 residues: Ribosome hibernation promotion factor (187 aa).

This sequence belongs to the HPF/YfiA ribosome-associated protein family. Long HPF subfamily. Interacts with 100S ribosomes.

The protein resides in the cytoplasm. Involved in 100S ribosome formation from 70S ribosomes; 100S ribosomes are probably translationally inactive. Ribosome hibernation may be used by the cell to decrease overall energy consumption under nutrient-limiting conditions. Unlike E.coli, 100S ribosomes are present from mid-exponential growth, peak during the transition from log to stationary phase and then decrease. This is Ribosome hibernation promotion factor from Listeria monocytogenes serotype 1/2a (strain 10403S).